An 88-amino-acid polypeptide reads, in one-letter code: UPF0250 protein SO_1163 (88 aa).

This sequence belongs to the UPF0250 family.

This Shewanella oneidensis (strain ATCC 700550 / JCM 31522 / CIP 106686 / LMG 19005 / NCIMB 14063 / MR-1) protein is UPF0250 protein SO_1163.